Consider the following 934-residue polypeptide: Coiled-coil domain-containing protein 39 (934 aa).

Coiled coils occupy residues 17–133 (IPVA…DGLK), 164–512 (SQQD…HNDL), 540–615 (VDRS…SQIR), and 664–826 (VIKA…EQDI). Residues 866–934 (LPTAKGPSSR…NIPKGKKLNK (69 aa)) are disordered. The segment covering 873–892 (SSRSSSQSSLSSIRSLEDSI) has biased composition (low complexity). Ser887 and Ser895 each carry phosphoserine. Over residues 912–925 (RSDSSRSSSGSNSN) the composition is skewed to low complexity.

This sequence belongs to the CCDC39 family.

The protein resides in the cytoplasm. It is found in the cytoskeleton. The protein localises to the cilium axoneme. Required for assembly of dynein regulatory complex (DRC) and inner dynein arm (IDA) complexes, which are responsible for ciliary beat regulation, thereby playing a central role in motility in cilia and flagella. Probably acts together with CCDC40 to form a molecular ruler that determines the 96 nanometer (nm) repeat length and arrangements of components in cilia and flagella. Not required for outer dynein arm complexes assembly. The chain is Coiled-coil domain-containing protein 39 (Ccdc39) from Rattus norvegicus (Rat).